The sequence spans 323 residues: Dolichyl-phosphate beta-glucosyltransferase ALG5A (323 aa).

Over 1–5 (MKFWR) the chain is Lumenal. Residues 6-26 (FVQILFFLGVAAVGLVVAVMI) traverse the membrane as a helical segment. At 27 to 323 (ANADDTTLFD…GAWKIRDRRH (297 aa)) the chain is on the cytoplasmic side.

Belongs to the glycosyltransferase 2 family.

It localises to the endoplasmic reticulum membrane. The enzyme catalyses a di-trans,poly-cis-dolichyl phosphate + UDP-alpha-D-glucose = a di-trans,poly-cis-dolichyl beta-D-glucosyl phosphate + UDP. It participates in protein modification; protein glycosylation. In terms of biological role, dolichyl-phosphate beta-glucosyltransferase involved in the glycosylation of glycoproteins through the synthesis of dolichyl beta-D-glucosyl phosphate which serves as a sugar donor for transfer of three glucose residues to the Man-9-GlcNAc-2-PP-dolichol precursor to N-glycans. The protein is Dolichyl-phosphate beta-glucosyltransferase ALG5A of Trichomonas vaginalis (strain ATCC PRA-98 / G3).